The primary structure comprises 38 residues: Photosystem II reaction center protein L (38 aa).

The chain crosses the membrane as a helical span at residues 17 to 37; it reads SLYWGLLLIFVLAVLFSSYFF.

This sequence belongs to the PsbL family. As to quaternary structure, PSII is composed of 1 copy each of membrane proteins PsbA, PsbB, PsbC, PsbD, PsbE, PsbF, PsbH, PsbI, PsbJ, PsbK, PsbL, PsbM, PsbT, PsbX, PsbY, PsbZ, Psb30/Ycf12, at least 3 peripheral proteins of the oxygen-evolving complex and a large number of cofactors. It forms dimeric complexes.

It is found in the plastid. The protein localises to the chloroplast thylakoid membrane. Functionally, one of the components of the core complex of photosystem II (PSII). PSII is a light-driven water:plastoquinone oxidoreductase that uses light energy to abstract electrons from H(2)O, generating O(2) and a proton gradient subsequently used for ATP formation. It consists of a core antenna complex that captures photons, and an electron transfer chain that converts photonic excitation into a charge separation. This subunit is found at the monomer-monomer interface and is required for correct PSII assembly and/or dimerization. The chain is Photosystem II reaction center protein L from Thalassiosira pseudonana (Marine diatom).